Here is an 865-residue protein sequence, read N- to C-terminus: MANLLRVLMVAEKPSIALSIASVLSHGQMSTRRGSTEVHEFDGMFRGFKAHYRVTSVIGHVFSVDFPEKYQNWATIDPQDLFDAPIIKKESNPKAHICRHLSNEARGCSYMVLWLDCDREGENICFEVIESTGFDMKDSKRKVYRARFSSVTEKDISKAMDNLVEPNRDEALAVDARQEIDLKVGVAFSRFQTSYFQGKYQNLDCRVISYGPCQTPTLGFCVQRYMHINTFKPEKFWALRPYIRKDGYELQLEWERRRLFDLEAATVFQKLVVEGRTAKVMDVSEKQEVKGRPAGLNTVNLLKVASSALGFGPQTAMHLAERLYTQGFISYPRTESTAYPSSFDFTDTLRAQVSNPVWGGYVQRLLSDGFHMPKSGTDAGDHPPITPMRAATEVMVGGDAWRLYQYVCQHFLGTVSPNCKYIRTKVELSIGGETFHCTGQRVTEKGFTAIMPWSAVDEKKLPSFLKGERIEVLRVELYEGNTAPPDYLTESELISLMEKHGIGTDASIAVHINNIGERNYVQVQSGRKMVPTALGITLIRGYQCIDPDLCLPDIRSFIEQQITLVAKGQADHSHVVQHVIQQFRRKFSYFVQQIEHMDALFEAQFSPLADSGRALSKCGKCLRYMKHITAVPPRLFCGTCEEVYYLPQKGTVKLYKELTCPLDNFELVIYSVPGPEGKSFPLCPYCYNSPPFEGIDTLFGASKTPNAPAKTKTGAGMPCSLCPHPTCQHSVRNQGVCACPECEGTLVLDPVSFPKWKLNCNLCSCIVLLPEGAHRITTTSNRCPECDSAIIEIDFNKKTTPLENGATLHQGCVLCDELLLSLVEVKHGRSFVRRGGRGRGRGRGRGRGGRRGSKSVDPKMSFRDF.

The Toprim domain maps to R6–V151. 3 residues coordinate Mg(2+): E12, D116, and D118. Residues N167–F587 enclose the Topo IA-type catalytic domain. An interaction with DNA region spans residues S209–Q214. The O-(5'-phospho-DNA)-tyrosine intermediate role is filled by Y331. Basic residues predominate over residues R833–S853. The tract at residues R833 to F865 is disordered. A compositionally biased stretch (basic and acidic residues) spans K854–F865.

This sequence belongs to the type IA topoisomerase family. Mg(2+) serves as cofactor.

The enzyme catalyses ATP-independent breakage of single-stranded DNA, followed by passage and rejoining.. Functionally, releases the supercoiling and torsional tension of DNA introduced during the DNA replication and transcription by transiently cleaving and rejoining one strand of the DNA duplex. Introduces a single-strand break via transesterification at a target site in duplex DNA. The scissile phosphodiester is attacked by the catalytic tyrosine of the enzyme, resulting in the formation of a DNA-(5'-phosphotyrosyl)-enzyme intermediate and the expulsion of a 3'-OH DNA strand. The free DNA strand than undergoes passage around the unbroken strand thus removing DNA supercoils. Finally, in the religation step, the DNA 3'-OH attacks the covalent intermediate to expel the active-site tyrosine and restore the DNA phosphodiester backbone. The protein is DNA topoisomerase 3-beta of Arabidopsis thaliana (Mouse-ear cress).